The sequence spans 1412 residues: DNA-directed RNA polymerase subunit beta' (1412 aa).

Residues cysteine 70, cysteine 72, cysteine 85, and cysteine 88 each coordinate Zn(2+). Aspartate 460, aspartate 462, and aspartate 464 together coordinate Mg(2+). Zn(2+)-binding residues include cysteine 819, cysteine 893, cysteine 900, and cysteine 903. Residues 1392-1412 (EEAFEFGTPSAPAEEPQHPAE) form a disordered region.

Belongs to the RNA polymerase beta' chain family. As to quaternary structure, the RNAP catalytic core consists of 2 alpha, 1 beta, 1 beta' and 1 omega subunit. When a sigma factor is associated with the core the holoenzyme is formed, which can initiate transcription. Mg(2+) serves as cofactor. It depends on Zn(2+) as a cofactor.

It carries out the reaction RNA(n) + a ribonucleoside 5'-triphosphate = RNA(n+1) + diphosphate. Functionally, DNA-dependent RNA polymerase catalyzes the transcription of DNA into RNA using the four ribonucleoside triphosphates as substrates. The chain is DNA-directed RNA polymerase subunit beta' from Burkholderia mallei (strain NCTC 10247).